Here is a 406-residue protein sequence, read N- to C-terminus: Formate-dependent phosphoribosylglycinamide formyltransferase (406 aa).

N(1)-(5-phospho-beta-D-ribosyl)glycinamide is bound by residues 27-28 (EL) and E87. ATP is bound by residues R120, K162, 167-172 (SSGKGQ), 202-205 (EGFI), and E210. Residues 125–320 (RLAAETLGLP…EFELHARALL (196 aa)) form the ATP-grasp domain. Residues E279 and E291 each coordinate Mg(2+). Residues D298, K367, and 374-375 (RR) contribute to the N(1)-(5-phospho-beta-D-ribosyl)glycinamide site.

Belongs to the PurK/PurT family. In terms of assembly, homodimer.

The enzyme catalyses N(1)-(5-phospho-beta-D-ribosyl)glycinamide + formate + ATP = N(2)-formyl-N(1)-(5-phospho-beta-D-ribosyl)glycinamide + ADP + phosphate + H(+). It functions in the pathway purine metabolism; IMP biosynthesis via de novo pathway; N(2)-formyl-N(1)-(5-phospho-D-ribosyl)glycinamide from N(1)-(5-phospho-D-ribosyl)glycinamide (formate route): step 1/1. Functionally, involved in the de novo purine biosynthesis. Catalyzes the transfer of formate to 5-phospho-ribosyl-glycinamide (GAR), producing 5-phospho-ribosyl-N-formylglycinamide (FGAR). Formate is provided by PurU via hydrolysis of 10-formyl-tetrahydrofolate. This is Formate-dependent phosphoribosylglycinamide formyltransferase from Bordetella bronchiseptica (strain ATCC BAA-588 / NCTC 13252 / RB50) (Alcaligenes bronchisepticus).